Reading from the N-terminus, the 446-residue chain is Alkylglycerol monooxygenase (446 aa).

2 consecutive transmembrane segments (helical) span residues 43–63 (ATVYFFIMLILEMIISWAWKG) and 110–130 (WDSPWTWWLTFLGVDFGYYWF). The Fatty acid hydroxylase domain maps to 118–248 (LTFLGVDFGY…LIIWDRMFGT (131 aa)). The Histidine box-1 signature appears at 131 to 135 (HRMAH). Residues 144 to 148 (HQTHH) carry the Histidine box-2 motif. Residues 167–187 (YFSWMFYWPMAFCIPPSVFAV) form a helical membrane-spanning segment. A Histidine box-3 motif is present at residues 220 to 224 (HRVHH). 3 consecutive transmembrane segments (helical) span residues 339–359 (MMHFLLLLAVYVHMFEAKLIL), 362–382 (ATLLLRIGYILLTLTSLGFIF), and 412–434 (VPYLRIINEVTFSICTAAWGLKA).

It belongs to the sterol desaturase family. TMEM195 subfamily. Fe cation serves as cofactor.

It localises to the endoplasmic reticulum membrane. It catalyses the reaction 1-O-(1,2-saturated-alkyl)-sn-glycerol + (6R)-L-erythro-5,6,7,8-tetrahydrobiopterin + O2 = a 1-(1-hydroxyalkyl)-sn-glycerol + (6R)-L-erythro-6,7-dihydrobiopterin + H2O. Functionally, glyceryl-ether monooxygenase that cleaves the O-alkyl bond of ether lipids. Ether lipids are essential components of brain membranes. The sequence is that of Alkylglycerol monooxygenase (agmo) from Xenopus tropicalis (Western clawed frog).